We begin with the raw amino-acid sequence, 398 residues long: LIM domain-binding protein 2 (398 aa).

2 disordered regions span residues 245 to 280 (PPAEPTRQTTTKRRKRKNSTNNASNSNAGNNATSAY) and 354 to 398 (DAAN…QASQ). Over residues 263 to 279 (STNNASNSNAGNNATSA) the composition is skewed to low complexity. Residues 323-362 (DVMVVGEPTLMGGEFGDEDERLITRLENTQYDAANGMDDE) enclose the LIM interaction domain (LID) domain.

It belongs to the LDB family. As to expression, expressed in adult brain, lung, spleen and kidney. Isoform b is generally expressed at a higher level than isoform a.

Its subcellular location is the nucleus. Binds to the LIM domain of a wide variety of LIM domain-containing transcription factors. The protein is LIM domain-binding protein 2 of Xenopus laevis (African clawed frog).